A 699-amino-acid chain; its full sequence is Elongation factor G (699 aa).

The region spanning 8 to 288 (EDYRNFGIMA…AVVDYLPSPL (281 aa)) is the tr-type G domain. Residues 17–24 (AHIDAGKT), 86–90 (DTPGH), and 140–143 (NKMD) each bind GTP.

It belongs to the TRAFAC class translation factor GTPase superfamily. Classic translation factor GTPase family. EF-G/EF-2 subfamily.

It localises to the cytoplasm. In terms of biological role, catalyzes the GTP-dependent ribosomal translocation step during translation elongation. During this step, the ribosome changes from the pre-translocational (PRE) to the post-translocational (POST) state as the newly formed A-site-bound peptidyl-tRNA and P-site-bound deacylated tRNA move to the P and E sites, respectively. Catalyzes the coordinated movement of the two tRNA molecules, the mRNA and conformational changes in the ribosome. The protein is Elongation factor G of Rhizobium rhizogenes (strain K84 / ATCC BAA-868) (Agrobacterium radiobacter).